The primary structure comprises 91 residues: Acyl carrier protein (91 aa).

Residues 6–81 (EEIIAELGQI…DIVAYIQKLE (76 aa)) form the Carrier domain. O-(pantetheine 4'-phosphoryl)serine is present on serine 41.

It belongs to the acyl carrier protein (ACP) family. In terms of processing, 4'-phosphopantetheine is transferred from CoA to a specific serine of apo-ACP by AcpS. This modification is essential for activity because fatty acids are bound in thioester linkage to the sulfhydryl of the prosthetic group.

It localises to the cytoplasm. Its pathway is lipid metabolism; fatty acid biosynthesis. Functionally, carrier of the growing fatty acid chain in fatty acid biosynthesis. The polypeptide is Acyl carrier protein (Rhodococcus erythropolis (strain PR4 / NBRC 100887)).